Here is a 140-residue protein sequence, read N- to C-terminus: MKILGFTFPDDLLYEPEKHVWVRIEDNSVVSIGVTDLGQYMAGKIFQVTAKQKGEKVNGRSVLFSIESAKWIGKFRLPIEGEVFDVNEEVVKNPSIINERPYDSWIVKIRVEDMDIIKRTFKPIQEVYKQFEEEAKRVVR.

In terms of domain architecture, Lipoyl-binding spans 29–110 (VVSIGVTDLG…PYDSWIVKIR (82 aa)). An N6-lipoyllysine modification is found at K70.

Belongs to the GcvH family. In terms of assembly, the glycine cleavage system is composed of four proteins: P, T, L and H. The cofactor is (R)-lipoate.

In terms of biological role, the glycine cleavage system catalyzes the degradation of glycine. The H protein shuttles the methylamine group of glycine from the P protein to the T protein. The polypeptide is Probable glycine cleavage system H protein 3 (Saccharolobus solfataricus (strain ATCC 35092 / DSM 1617 / JCM 11322 / P2) (Sulfolobus solfataricus)).